An 86-amino-acid polypeptide reads, in one-letter code: Probable weak neurotoxin NNAM1 (86 aa).

The first 21 residues, 1–21 (MKTLLLSLVVVTIVCLDLGYT), serve as a signal peptide directing secretion. Disulfide bonds link Cys24–Cys45, Cys27–Cys32, Cys38–Cys63, Cys67–Cys78, and Cys79–Cys84.

It belongs to the three-finger toxin family. Ancestral subfamily. Orphan group II sub-subfamily. As to expression, expressed by the venom gland.

The protein resides in the secreted. In terms of biological role, binds with low affinity to muscular (alpha-1-beta-1-delta-epsilon/CHRNA1-CHRNB1-CHRND-CHRNE) and very low affinity to neuronal (alpha-7/CHRNA7) nicotinic acetylcholine receptor (nAChR). This chain is Probable weak neurotoxin NNAM1, found in Naja atra (Chinese cobra).